The chain runs to 213 residues: MNIILFGPPGAGKGTQAQSIVKKHNYFQLSTGNLLRDEVKSKTDLGVDIEKLISNGKFVSDEIVNTLLRQSLTNLKYRDRIIFDGYPRNVEQAINLEVLLNEFNQTIGHTIFLNVSRDIIEKRIMGRMTCEKCNMTLNEYFNKEQIELHPCGVEHLKKRKDDNLEIVISRYDTYMSSTKPVLEFYSKNSNFTEIDGAGEIDQITNKINEILKV.

10–15 contributes to the ATP binding site; sequence GAGKGT. The segment at 30–59 is NMP; the sequence is STGNLLRDEVKSKTDLGVDIEKLISNGKFV. AMP-binding positions include threonine 31, arginine 36, 57-59, 85-88, and glutamine 92; these read KFV and GYPR. The LID stretch occupies residues 126 to 162; the sequence is GRMTCEKCNMTLNEYFNKEQIELHPCGVEHLKKRKDD. Arginine 127 provides a ligand contact to ATP. Residues arginine 159 and arginine 170 each coordinate AMP. An ATP-binding site is contributed by glycine 198.

The protein belongs to the adenylate kinase family. In terms of assembly, monomer.

It is found in the cytoplasm. The catalysed reaction is AMP + ATP = 2 ADP. The protein operates within purine metabolism; AMP biosynthesis via salvage pathway; AMP from ADP: step 1/1. Catalyzes the reversible transfer of the terminal phosphate group between ATP and AMP. Plays an important role in cellular energy homeostasis and in adenine nucleotide metabolism. The sequence is that of Adenylate kinase from Pelagibacter ubique (strain HTCC1062).